Consider the following 317-residue polypeptide: Olfactory receptor 6P1 (317 aa).

Topologically, residues 1–25 are extracellular; that stretch reads MRNLSGGHVEEFVLVGFPTTPPLQL. Asn-3 is a glycosylation site (N-linked (GlcNAc...) asparagine). Residues 26–46 traverse the membrane as a helical segment; it reads LLFVLFFAIYLLTLLENALIV. Residues 47–54 are Cytoplasmic-facing; it reads FTIWLAPS. Residues 55 to 75 form a helical membrane-spanning segment; the sequence is LHRPMYFFLGHLSFLELWYIN. At 76–99 the chain is on the extracellular side; it reads VTIPRLLAAFLTQDGRVSYVGCMT. Cys-97 and Cys-189 are oxidised to a cystine. The helical transmembrane segment at 100-120 threads the bilayer; that stretch reads QLYFFIALACTECVLLAVMAY. The Cytoplasmic segment spans residues 121 to 139; the sequence is DRYLAICGPLLYPSLMPSS. A helical transmembrane segment spans residues 140–160; sequence LATRLAAASWGSGFFSSMMKL. Over 161–197 the chain is Extracellular; the sequence is LFISQLSYCGPNIINHFFCDISPLLNLTCSDKEQAEL. N-linked (GlcNAc...) asparagine glycosylation occurs at Asn-186. The helical transmembrane segment at 198–217 threads the bilayer; it reads VDFLLALVMILLPLLAVVSS. Residues 218–237 are Cytoplasmic-facing; that stretch reads YTAIIAAILRIPTSRGRHKA. The helical transmembrane segment at 238-258 threads the bilayer; it reads FSTCAAHLAVVVIYYSSTLFT. The Extracellular segment spans residues 259–271; the sequence is YARPRAMYTFNHN. The helical transmembrane segment at 272-292 threads the bilayer; that stretch reads KIISVLYTIIVPFFNPAIYCL. The Cytoplasmic segment spans residues 293–317; the sequence is RNKEVKEAFRKTVMGRCHYPRDVQD.

Belongs to the G-protein coupled receptor 1 family.

The protein localises to the cell membrane. In terms of biological role, odorant receptor. The protein is Olfactory receptor 6P1 (OR6P1) of Homo sapiens (Human).